The primary structure comprises 363 residues: Phosphoserine aminotransferase (363 aa).

Residue Arg-42 participates in L-glutamate binding. Residues 76-77, Trp-102, Thr-156, Asp-175, and Gln-198 contribute to the pyridoxal 5'-phosphate site; that span reads GR. The residue at position 199 (Lys-199) is an N6-(pyridoxal phosphate)lysine. 240–241 is a binding site for pyridoxal 5'-phosphate; that stretch reads NT.

Belongs to the class-V pyridoxal-phosphate-dependent aminotransferase family. SerC subfamily. As to quaternary structure, homodimer. Requires pyridoxal 5'-phosphate as cofactor.

It localises to the cytoplasm. It carries out the reaction O-phospho-L-serine + 2-oxoglutarate = 3-phosphooxypyruvate + L-glutamate. It catalyses the reaction 4-(phosphooxy)-L-threonine + 2-oxoglutarate = (R)-3-hydroxy-2-oxo-4-phosphooxybutanoate + L-glutamate. Its pathway is amino-acid biosynthesis; L-serine biosynthesis; L-serine from 3-phospho-D-glycerate: step 2/3. The protein operates within cofactor biosynthesis; pyridoxine 5'-phosphate biosynthesis; pyridoxine 5'-phosphate from D-erythrose 4-phosphate: step 3/5. Functionally, catalyzes the reversible conversion of 3-phosphohydroxypyruvate to phosphoserine and of 3-hydroxy-2-oxo-4-phosphonooxybutanoate to phosphohydroxythreonine. The sequence is that of Phosphoserine aminotransferase from Shewanella baltica (strain OS155 / ATCC BAA-1091).